We begin with the raw amino-acid sequence, 374 residues long: N-acetyldiaminopimelate deacetylase (374 aa).

Residue aspartate 69 is part of the active site. Glutamate 128 acts as the Proton acceptor in catalysis.

This sequence belongs to the peptidase M20A family. N-acetyldiaminopimelate deacetylase subfamily.

The enzyme catalyses N-acetyl-(2S,6S)-2,6-diaminopimelate + H2O = (2S,6S)-2,6-diaminopimelate + acetate. It functions in the pathway amino-acid biosynthesis; L-lysine biosynthesis via DAP pathway; LL-2,6-diaminopimelate from (S)-tetrahydrodipicolinate (acetylase route): step 3/3. In terms of biological role, catalyzes the conversion of N-acetyl-diaminopimelate to diaminopimelate and acetate. This Bacillus velezensis (strain DSM 23117 / BGSC 10A6 / LMG 26770 / FZB42) (Bacillus amyloliquefaciens subsp. plantarum) protein is N-acetyldiaminopimelate deacetylase.